A 168-amino-acid polypeptide reads, in one-letter code: RNA pyrophosphohydrolase (168 aa).

One can recognise a Nudix hydrolase domain in the interval 8 to 159 (PYRTCVGVML…KRPVYERVVK (152 aa)). A Nudix box motif is present at residues 47-68 (GGVDPGEDTWKAAKRELYEETS).

It belongs to the Nudix hydrolase family. RppH subfamily. A divalent metal cation is required as a cofactor.

Functionally, accelerates the degradation of transcripts by removing pyrophosphate from the 5'-end of triphosphorylated RNA, leading to a more labile monophosphorylated state that can stimulate subsequent ribonuclease cleavage. This Rhodopseudomonas palustris (strain ATCC BAA-98 / CGA009) protein is RNA pyrophosphohydrolase.